We begin with the raw amino-acid sequence, 84 residues long: Sec-independent protein translocase protein TatA (84 aa).

A helical membrane pass occupies residues M1 to G21. Basic and acidic residues-rich tracts occupy residues A42–Q55 and I64–V84. Positions A42–V84 are disordered.

The protein belongs to the TatA/E family. In terms of assembly, the Tat system comprises two distinct complexes: a TatABC complex, containing multiple copies of TatA, TatB and TatC subunits, and a separate TatA complex, containing only TatA subunits. Substrates initially bind to the TatABC complex, which probably triggers association of the separate TatA complex to form the active translocon.

The protein localises to the cell inner membrane. Part of the twin-arginine translocation (Tat) system that transports large folded proteins containing a characteristic twin-arginine motif in their signal peptide across membranes. TatA could form the protein-conducting channel of the Tat system. The chain is Sec-independent protein translocase protein TatA from Salmonella typhi.